A 380-amino-acid chain; its full sequence is Cytochrome b (380 aa).

4 helical membrane-spanning segments follow: residues 34 to 54 (FGSLLGICLLTQILTGLLLAM), 78 to 99 (WLIRNLHANGASFFFICIYLHI), 114 to 134 (WNTGVILLLTLMATAFVGYVL), and 179 to 199 (FFALHFLLPFMIAGLTLIHLT). Residues His-84 and His-98 each coordinate heme b. Residues His-183 and His-197 each coordinate heme b. Residue His-202 coordinates a ubiquinone. The next 4 helical transmembrane spans lie at 227–247 (LKDILGFMLLLLPLTTLALFS), 289–309 (LGGVLALAASVLVLFLAPFLH), 321–341 (ISQLLFWILVANLFILTWVGS), and 348–368 (FIIIGQLASLTYFTILLILFP).

The protein belongs to the cytochrome b family. As to quaternary structure, the cytochrome bc1 complex contains 11 subunits: 3 respiratory subunits (MT-CYB, CYC1 and UQCRFS1), 2 core proteins (UQCRC1 and UQCRC2) and 6 low-molecular weight proteins (UQCRH/QCR6, UQCRB/QCR7, UQCRQ/QCR8, UQCR10/QCR9, UQCR11/QCR10 and a cleavage product of UQCRFS1). This cytochrome bc1 complex then forms a dimer. Heme b is required as a cofactor.

The protein localises to the mitochondrion inner membrane. Its function is as follows. Component of the ubiquinol-cytochrome c reductase complex (complex III or cytochrome b-c1 complex) that is part of the mitochondrial respiratory chain. The b-c1 complex mediates electron transfer from ubiquinol to cytochrome c. Contributes to the generation of a proton gradient across the mitochondrial membrane that is then used for ATP synthesis. In Puffinus opisthomelas (Black-vented shearwater), this protein is Cytochrome b (MT-CYB).